The primary structure comprises 198 residues: Putative Do-like 15 protein (198 aa).

Residues 48–198 are serine protease; sequence KIFSFSREPN…VFENDSPSDK (151 aa). Catalysis depends on charge relay system residues His-86 and Ser-175.

Belongs to the peptidase S1B family.

The protein is Putative Do-like 15 protein (DEGP15) of Arabidopsis thaliana (Mouse-ear cress).